The primary structure comprises 1650 residues: HEAT repeat-containing protein 1 homolog (1650 aa).

The tract at residues 1183–1210 (QYDSAASPGSSVAGGRGNRGHRIRQQSL) is disordered. Residues 1609 to 1645 (LLPFLNELIEDENKQVEAQCQKVINSLQHKFGETFWS) form an HEAT repeat.

It belongs to the HEATR1/UTP10 family.

The protein resides in the nucleus. It localises to the nucleolus. Involved in nucleolar processing of pre-18S ribosomal RNA. Involved in ribosome biosynthesis. The protein is HEAT repeat-containing protein 1 homolog (toe-1) of Caenorhabditis elegans.